We begin with the raw amino-acid sequence, 222 residues long: MNTPIVILNYKTYLESSGENALELARALKSASEESGITMVAAPQAADIYRIQDQISLPIFAQHIDPITPGGHTGSNLIETLIEAGISGSLINHSENRMKLADIDEVIQLCKQNDIESCVCTNNIATSKAIATFSPDAVAVEPPELIGTGIPVSQAQPEVVEDSVKGVKSINKKIKVLCGAGISTGDDMKAAMDLGADGVLLASGIVKAKNPKEALLDLVSKL.

9-11 (NYK) lines the substrate pocket. Histidine 93 serves as the catalytic Electrophile. The active-site Proton acceptor is the glutamate 141. Substrate contacts are provided by residues isoleucine 146, glycine 181, and 202 to 203 (AS).

The protein belongs to the triosephosphate isomerase family. Homotetramer; dimer of dimers.

The protein localises to the cytoplasm. The enzyme catalyses D-glyceraldehyde 3-phosphate = dihydroxyacetone phosphate. The protein operates within carbohydrate biosynthesis; gluconeogenesis. Its pathway is carbohydrate degradation; glycolysis; D-glyceraldehyde 3-phosphate from glycerone phosphate: step 1/1. Its function is as follows. Involved in the gluconeogenesis. Catalyzes stereospecifically the conversion of dihydroxyacetone phosphate (DHAP) to D-glyceraldehyde-3-phosphate (G3P). This is Triosephosphate isomerase from Methanobrevibacter smithii (strain ATCC 35061 / DSM 861 / OCM 144 / PS).